The sequence spans 284 residues: MRFSALLVTLGLTGALATPTLVSREAPAVGVISDISAQTSALASAVSSYNGGDPSAVKSASEKLVSTINSGVDTVKSGPALSTADALALTSPVQDLTKQVEGVIDDLISKKDKFVAANAGGTVYEDLKAQYTAADSLAKAISAKVPESLSDIAAQLSAGITAAIQKGIDAYKDAASSTGTASSSAPATETATATETSTATGTVTETATSTPVIPTGTASGSASATPSTTATPTTGGSGSGSGSSTGTATASTSTNLLSTGAASKEHFSYSLGGAVVAAAIAVAL.

Residues 1 to 17 form the signal peptide; sequence MRFSALLVTLGLTGALA. A compositionally biased stretch (low complexity) spans 176–234; the sequence is SSTGTASSSAPATETATATETSTATGTVTETATSTPVIPTGTASGSASATPSTTATPTT. The disordered stretch occupies residues 176–252; it reads SSTGTASSSA…SSTGTATAST (77 aa).

It belongs to the cell wall mannoprotein 1 family. Post-translationally, galactomannoprotein, glycosylated.

The protein resides in the secreted. Its subcellular location is the cell wall. In terms of biological role, constitutive protein of the cell wall. Antigen target of host humoral immune response. The polypeptide is Cell wall mannoprotein 1 (Aspergillus fumigatus (Neosartorya fumigata)).